The sequence spans 331 residues: Phosphoribosylformylglycinamidine cyclo-ligase (331 aa).

Belongs to the AIR synthase family.

The protein resides in the cytoplasm. It catalyses the reaction 2-formamido-N(1)-(5-O-phospho-beta-D-ribosyl)acetamidine + ATP = 5-amino-1-(5-phospho-beta-D-ribosyl)imidazole + ADP + phosphate + H(+). It participates in purine metabolism; IMP biosynthesis via de novo pathway; 5-amino-1-(5-phospho-D-ribosyl)imidazole from N(2)-formyl-N(1)-(5-phospho-D-ribosyl)glycinamide: step 2/2. The sequence is that of Phosphoribosylformylglycinamidine cyclo-ligase from Clostridium botulinum (strain Loch Maree / Type A3).